A 195-amino-acid polypeptide reads, in one-letter code: Probable GTP-binding protein EngB (195 aa).

Residues 24–195 (DWPEIALAGR…EAWEAILRYL (172 aa)) enclose the EngB-type G domain. Residues 32 to 39 (GRSNVGKS), 59 to 63 (GKTQL), 77 to 80 (DVPG), 144 to 147 (TKAD), and 176 to 178 (FSS) each bind GTP. Mg(2+) is bound by residues Ser-39 and Thr-61.

The protein belongs to the TRAFAC class TrmE-Era-EngA-EngB-Septin-like GTPase superfamily. EngB GTPase family. The cofactor is Mg(2+).

Functionally, necessary for normal cell division and for the maintenance of normal septation. The protein is Probable GTP-binding protein EngB of Lactococcus lactis subsp. lactis (strain IL1403) (Streptococcus lactis).